An 88-amino-acid chain; its full sequence is U13-theraphotoxin-Cg1a (88 aa).

An N-terminal signal peptide occupies residues 1–21; that stretch reads MKVSVLITLAVLGVMFVWASA. Residues 22–52 constitute a propeptide that is removed on maturation; it reads AELEQSGSDQKDSDSPAWLKSMERIFQSEER. Intrachain disulfides connect C54-C68, C61-C73, and C67-C80.

Belongs to the neurotoxin 10 (Hwtx-1) family. 41 (Jztx-36) subfamily. Expressed by the venom gland.

The protein resides in the secreted. Functionally, probable ion channel inhibitor. This is U13-theraphotoxin-Cg1a from Chilobrachys guangxiensis (Chinese earth tiger tarantula).